Reading from the N-terminus, the 195-residue chain is Large ribosomal subunit protein bL9 (195 aa).

This sequence belongs to the bacterial ribosomal protein bL9 family.

Its function is as follows. Binds to the 23S rRNA. This Rhodopseudomonas palustris (strain TIE-1) protein is Large ribosomal subunit protein bL9.